Reading from the N-terminus, the 254-residue chain is MESYIIDTYQGVPYTAAVQVDLIEKDSNPATLTVWFPLFQSSTPAPVLLDQLKTLSITTQYTASPEGPVLQVNAAAQGAAMSALPKKFAVSAAVALDEYSRLEFGTLTVCDVRSIYLTTLKPYGMVSKIMTDVRSVGRKTHDLIALCDFIDIEKGVPITIPAYIKAVSIKDSESATVEAAISGEADQAITQARIAPYAGLILIMTMNNPKGIFKKLGAGMQVIVELGPYVQAESLGKICKTWNHQRTRYVLRSR.

Belongs to the pneumovirinae M protein family. In terms of assembly, forms dimers. Forms higher-order oligomers. Interacts with glycoprotein G (via N-terminus). Interacts with protein M2-1; this interaction directs the matrix protein localization to cytoplasmic inclusions comprising viral proteins L, N, P, and M2-1 and mediates the matrix protein association with the nucleocapsid.

It is found in the virion. It localises to the host cytoplasm. Its subcellular location is the host nucleus. The protein localises to the host cell membrane. Plays a crucial role in virus assembly into filaments and budding. Early in infection, localizes in the nucleus where it may inhibit host cell transcription. Later in infection, traffics to the cytoplasm to associate with inclusion bodies, the site of viral transcription and replication. During virus assembly and budding, acts as a bridge between the nucleocapsid and the lipid bilayer. This is Matrix protein (M) from Meleagris gallopavo (Wild turkey).